The following is a 207-amino-acid chain: Putative 3-methyladenine DNA glycosylase (207 aa).

The protein belongs to the DNA glycosylase MPG family.

The protein is Putative 3-methyladenine DNA glycosylase of Burkholderia cenocepacia (strain HI2424).